A 554-amino-acid polypeptide reads, in one-letter code: (Z)-gamma-bisabolene synthase 1 (554 aa).

The Mg(2+) site is built by Asp-306, Asp-310, Asp-450, and Asp-458. Residues 306–310 carry the DDXXD motif motif; sequence DDACD.

This sequence belongs to the terpene synthase family. Tpsa subfamily. Requires Mg(2+) as cofactor. Mn(2+) serves as cofactor. Predominantly expressed in roots. Expressed in the cortex and the sub-epidermal layers of roots. Also detected in leaf hydathodes and flower stigmata.

It localises to the cytoplasm. It catalyses the reaction (2E,6E)-farnesyl diphosphate = (Z)-gamma-bisabolene + diphosphate. It functions in the pathway secondary metabolite biosynthesis; terpenoid biosynthesis. Its function is as follows. Involved in sesquiterpene (C15) biosynthesis. The major product is (Z)-gamma-bisabolene with minor amounts of (E)-nerolidol and alpha-bisabolol. The polypeptide is (Z)-gamma-bisabolene synthase 1 (TPS12) (Arabidopsis thaliana (Mouse-ear cress)).